Here is a 315-residue protein sequence, read N- to C-terminus: Taste receptor type 2 member 3 (315 aa).

The Extracellular segment spans residues 1-5 (MGLTD). The chain crosses the membrane as a helical span at residues 6–26 (GVFLIVCGAQFTLGILXNGFI). Residues 27 to 41 (GLVNGRSWFKTKRMS) lie on the Cytoplasmic side of the membrane. A helical transmembrane segment spans residues 42-62 (LSDFIIATLALSRIILLCIIL). Residues 63–93 (TDSFLIVFSVKEHDSGIIMQLIDVFWTFTNH) lie on the Extracellular side of the membrane. The helical transmembrane segment at 94–114 (LSIWFATCLGVLYCLKIASFS) threads the bilayer. Over 115 to 127 (HPTFLWLKWRVSR) the chain is Cytoplasmic. A helical transmembrane segment spans residues 128 to 148 (VMVWMLLGALLLSCGSTASLI). Residues 149–185 (NEFKLYSVLRGIEATRNVTEHFRKKRNEYYLIHVLGT) lie on the Extracellular side of the membrane. Residue Asn165 is glycosylated (N-linked (GlcNAc...) asparagine). Residues 186–206 (LWYLPPLVVSLASYFLLIFSL) traverse the membrane as a helical segment. Topologically, residues 207–233 (GRHTRQMLQNSTSSRDPSTEAHKRAIR) are cytoplasmic. Residues 234–254 (IILSFFFLFLLYFLAFLIASF) traverse the membrane as a helical segment. Residues 255–265 (GNFLPETKMAK) are Extracellular-facing. The helical transmembrane segment at 266–286 (MIGEVMTMFYPAGHSFIVILG) threads the bilayer. Residues 287–315 (NSKLKQTFVEMLRCESGHLKPGSKGPIFS) lie on the Cytoplasmic side of the membrane.

This sequence belongs to the G-protein coupled receptor T2R family.

It is found in the membrane. Functionally, gustducin-coupled receptor implicated in the perception of bitter compounds in the oral cavity and the gastrointestinal tract. Signals through PLCB2 and the calcium-regulated cation channel TRPM5. This is Taste receptor type 2 member 3 (TAS2R3) from Papio hamadryas (Hamadryas baboon).